The following is a 131-amino-acid chain: Gem-associated protein 7 (131 aa).

Methionine 1 bears the N-acetylmethionine mark. Residues 1 to 29 (MQTPVNIPVPVLRLPRGPDGFSRGFAPDG) form the SUZ-C domain. Threonine 3 is subject to Phosphothreonine. The Sm domain maps to 65–131 (RYLRSLLAMV…SDIISYTFKP (67 aa)).

Belongs to the gemin-7 family. In terms of assembly, part of the core SMN complex that contains SMN1, GEMIN2/SIP1, DDX20/GEMIN3, GEMIN4, GEMIN5, GEMIN6, GEMIN7, GEMIN8 and STRAP/UNRIP. Part of the SMN-Sm complex that contains SMN1, GEMIN2/SIP1, DDX20/GEMIN3, GEMIN4, GEMIN5, GEMIN6, GEMIN7, GEMIN8, STRAP/UNRIP and the Sm proteins SNRPB, SNRPD1, SNRPD2, SNRPD3, SNRPE, SNRPF and SNRPG. Interacts with GEMIN6; the interaction is direct. Interacts with STRAP/UNRIP; the interaction is direct. Interacts with GEMIN8; the interaction is direct. Interacts with SNRPB, SNRPD2, SNRPD3 and SNRPE; the interaction is direct.

The protein localises to the nucleus. It localises to the nucleoplasm. The protein resides in the gem. Its subcellular location is the cytoplasm. Its function is as follows. The SMN complex catalyzes the assembly of small nuclear ribonucleoproteins (snRNPs), the building blocks of the spliceosome, and thereby plays an important role in the splicing of cellular pre-mRNAs. Most spliceosomal snRNPs contain a common set of Sm proteins SNRPB, SNRPD1, SNRPD2, SNRPD3, SNRPE, SNRPF and SNRPG that assemble in a heptameric protein ring on the Sm site of the small nuclear RNA to form the core snRNP (Sm core). In the cytosol, the Sm proteins SNRPD1, SNRPD2, SNRPE, SNRPF and SNRPG are trapped in an inactive 6S pICln-Sm complex by the chaperone CLNS1A that controls the assembly of the core snRNP. To assemble core snRNPs, the SMN complex accepts the trapped 5Sm proteins from CLNS1A forming an intermediate. Binding of snRNA inside 5Sm triggers eviction of the SMN complex, thereby allowing binding of SNRPD3 and SNRPB to complete assembly of the core snRNP. The sequence is that of Gem-associated protein 7 (GEMIN7) from Homo sapiens (Human).